The sequence spans 698 residues: Potassium-transporting ATPase ATP-binding subunit (698 aa).

The next 4 helical transmembrane spans lie at 56 to 76, 82 to 102, 240 to 260, and 271 to 291; these read IMFVVEIGFFITLLLSVVPSL, LWFNITVTLVLLFTVFFANFA, TVLISLTLIFLIAVVTLPLFT, and ILVALLVCLIPTTIGGLLSAI. Catalysis depends on Asp-324, which acts as the 4-aspartylphosphate intermediate. ATP contacts are provided by residues Asp-361, Glu-365, 393–400, and Lys-412; that span reads FKAETRMS. Asp-535 and Asp-539 together coordinate Mg(2+). Transmembrane regions (helical) follow at residues 605-625, 633-653, and 677-697; these read FAIIPAMFTVAIPQMEALNIM, AILSALIFNALIIPMLIPLAM, and GGVLVPFIGIKLVDLVVGLFI.

The protein belongs to the cation transport ATPase (P-type) (TC 3.A.3) family. Type IA subfamily. The system is composed of three essential subunits: KdpA, KdpB and KdpC.

Its subcellular location is the cell membrane. It catalyses the reaction K(+)(out) + ATP + H2O = K(+)(in) + ADP + phosphate + H(+). Functionally, part of the high-affinity ATP-driven potassium transport (or Kdp) system, which catalyzes the hydrolysis of ATP coupled with the electrogenic transport of potassium into the cytoplasm. This subunit is responsible for energy coupling to the transport system and for the release of the potassium ions to the cytoplasm. This chain is Potassium-transporting ATPase ATP-binding subunit, found in Bacillus cytotoxicus (strain DSM 22905 / CIP 110041 / 391-98 / NVH 391-98).